The chain runs to 453 residues: Ribosome biogenesis protein YTM1 (453 aa).

Residues 8 to 89 are ubiquitin-like (UBL) domain; the sequence is VKLRFFTREQ…ETFLNVEYTR (82 aa). Positions 99-453 are sufficient for interaction with ERB1 and association with 66S pre-ribosomes; that stretch reads SFSNEDWVSS…INKGDNIFKS (355 aa). WD repeat units lie at residues 101 to 139, 141 to 179, 199 to 237, 278 to 318, 320 to 359, 366 to 406, and 417 to 453; these read SNED…EKQY, GHSA…LKQP, GHKA…MTVV, SHTG…CIDT, TTSY…TSKI, GHKN…PMYT, and GVND…IFKS.

Belongs to the WD repeat WDR12/YTM1 family. In terms of assembly, component of the NOP7 complex, composed of ERB1, NOP7 and YTM1. The complex is held together by ERB1, which interacts with NOP7 via its N-terminal domain and with YTM1 via a high-affinity interaction between the seven-bladed beta-propeller domains of the 2 proteins. The NOP7 complex associates with the 66S pre-ribosome. Interacts (via UBL domain) with MDN1 (via VWFA/MIDAS domain).

The protein resides in the nucleus. It localises to the nucleolus. It is found in the nucleoplasm. In terms of biological role, component of the NOP7 complex, which is required for maturation of the 25S and 5.8S ribosomal RNAs and formation of the 60S ribosome. This Vanderwaltozyma polyspora (strain ATCC 22028 / DSM 70294 / BCRC 21397 / CBS 2163 / NBRC 10782 / NRRL Y-8283 / UCD 57-17) (Kluyveromyces polysporus) protein is Ribosome biogenesis protein YTM1.